The chain runs to 260 residues: Indole-3-glycerol phosphate synthase (260 aa).

Belongs to the TrpC family.

It catalyses the reaction 1-(2-carboxyphenylamino)-1-deoxy-D-ribulose 5-phosphate + H(+) = (1S,2R)-1-C-(indol-3-yl)glycerol 3-phosphate + CO2 + H2O. Its pathway is amino-acid biosynthesis; L-tryptophan biosynthesis; L-tryptophan from chorismate: step 4/5. The protein is Indole-3-glycerol phosphate synthase of Staphylococcus aureus (strain COL).